Consider the following 340-residue polypeptide: Hydroxyurea phosphotransferase (340 aa).

D240 serves as the catalytic Proton acceptor.

This sequence belongs to the aminoglycoside phosphotransferase family.

Functionally, potential phosphotransferase that inactivates hydroxyurea by phosphorylation of the hydroxy group in the hydroxylamine moiety. The chain is Hydroxyurea phosphotransferase (hur) from Kitasatospora aureofaciens (Streptomyces aureofaciens).